Here is a 417-residue protein sequence, read N- to C-terminus: Equilibrative nucleotide transporter 2 (417 aa).

11 consecutive transmembrane segments (helical) span residues 20–40 (AVCW…LTIV), 52–72 (PSRI…SVLV), 85–105 (LFGY…NLAT), 109–129 (GGIG…LADA), 144–164 (PEFL…TSGL), 185–205 (LFFA…AYVF), 265–285 (LAVT…GFLS), 292–312 (SLGD…DLVG), 328–348 (CLLI…ITGI), 354–374 (WMIF…VCVI), and 393–413 (LVLY…LWLV).

Belongs to the SLC29A/ENT transporter (TC 2.A.57) family. In terms of tissue distribution, expressed in leaves and flowers.

Its subcellular location is the cell membrane. May be involved in nucleoside transport. This Arabidopsis thaliana (Mouse-ear cress) protein is Equilibrative nucleotide transporter 2 (ENT2).